A 115-amino-acid polypeptide reads, in one-letter code: UPF0738 protein SSP1780 (115 aa).

The protein belongs to the UPF0738 family.

The chain is UPF0738 protein SSP1780 from Staphylococcus saprophyticus subsp. saprophyticus (strain ATCC 15305 / DSM 20229 / NCIMB 8711 / NCTC 7292 / S-41).